The sequence spans 513 residues: ATP synthase subunit alpha 2 (513 aa).

An ATP-binding site is contributed by 169 to 176 (GDRQTGKT).

This sequence belongs to the ATPase alpha/beta chains family. In terms of assembly, F-type ATPases have 2 components, CF(1) - the catalytic core - and CF(0) - the membrane proton channel. CF(1) has five subunits: alpha(3), beta(3), gamma(1), delta(1), epsilon(1). CF(0) has three main subunits: a(1), b(2) and c(9-12). The alpha and beta chains form an alternating ring which encloses part of the gamma chain. CF(1) is attached to CF(0) by a central stalk formed by the gamma and epsilon chains, while a peripheral stalk is formed by the delta and b chains.

The protein localises to the cell inner membrane. It carries out the reaction ATP + H2O + 4 H(+)(in) = ADP + phosphate + 5 H(+)(out). In terms of biological role, produces ATP from ADP in the presence of a proton gradient across the membrane. The alpha chain is a regulatory subunit. The polypeptide is ATP synthase subunit alpha 2 (Photobacterium profundum (strain SS9)).